We begin with the raw amino-acid sequence, 151 residues long: 3-hydroxyacyl-[acyl-carrier-protein] dehydratase FabZ (151 aa).

H58 is an active-site residue.

Belongs to the thioester dehydratase family. FabZ subfamily.

The protein localises to the cytoplasm. It catalyses the reaction a (3R)-hydroxyacyl-[ACP] = a (2E)-enoyl-[ACP] + H2O. Involved in unsaturated fatty acids biosynthesis. Catalyzes the dehydration of short chain beta-hydroxyacyl-ACPs and long chain saturated and unsaturated beta-hydroxyacyl-ACPs. The chain is 3-hydroxyacyl-[acyl-carrier-protein] dehydratase FabZ from Histophilus somni (strain 129Pt) (Haemophilus somnus).